A 545-amino-acid polypeptide reads, in one-letter code: Chaperonin GroEL (545 aa).

ATP-binding positions include 29-32 (TMGP), Lys50, 86-90 (DGTTT), Gly414, 477-479 (DAA), and Asp493.

This sequence belongs to the chaperonin (HSP60) family. In terms of assembly, forms a cylinder of 14 subunits composed of two heptameric rings stacked back-to-back. Interacts with the co-chaperonin GroES.

It localises to the cytoplasm. The catalysed reaction is ATP + H2O + a folded polypeptide = ADP + phosphate + an unfolded polypeptide.. Functionally, together with its co-chaperonin GroES, plays an essential role in assisting protein folding. The GroEL-GroES system forms a nano-cage that allows encapsulation of the non-native substrate proteins and provides a physical environment optimized to promote and accelerate protein folding. The chain is Chaperonin GroEL from Campylobacter jejuni (strain RM1221).